The following is a 236-amino-acid chain: UPF0502 protein Bcenmc03_4618 (236 aa).

The protein belongs to the UPF0502 family.

This is UPF0502 protein Bcenmc03_4618 from Burkholderia orbicola (strain MC0-3).